Here is a 223-residue protein sequence, read N- to C-terminus: Putative 3-methyladenine DNA glycosylase (223 aa).

This sequence belongs to the DNA glycosylase MPG family.

This Pseudomonas savastanoi pv. phaseolicola (strain 1448A / Race 6) (Pseudomonas syringae pv. phaseolicola (strain 1448A / Race 6)) protein is Putative 3-methyladenine DNA glycosylase.